Consider the following 571-residue polypeptide: MYYMLIGFIIVVIAVIGAGYILKRKHYQRINELEEKKIKLRERPVIDELSKVKKLKLTGQTEALFESWRSSWDEIETRLFPDLEEVLLEAEMNTDRYKFRSATNAENDIEQMLVVIEKQMDQILGGLKELLISEEKNAKESRATKEKFAELRREVLTRGFKLGETLPYVEAKLNELSESLNSYDSLTDQGDHLEAREIVIVVQKEMQVIEAQMERIPSLLHETDTILPEEMNKLRAGYEEMVRKGYYLAQMELDKEISRMKNQIDKMKKNVINLDLDEAEQGVEELHNEIDLFYDTLEHEAEARHFVKENHSPTSDKLQRQNAVSDALAEQITEVKQTYHVAEDDLAVYLKTSAKLSEAKENFEQLTTLIASGEIAYSAAQDTLKEIDAALITISAEQDKFAEELRSLRKDELEARDDAERMRRAIITLDRKMERERLPGLPEEYLSLREHMGESIDTLEKRLEEKPLNMKAVSQDWRIAEEDLIHLTEKAEEMMENVRLVEHVIQYANRYRLRNKELADELVQAENHFYNDYQYKKALEIAVTALEKVETGAFKKVEKAYASKVSVDDIE.

The Extracellular segment spans residues 1 to 3 (MYY). The helical transmembrane segment at 4 to 22 (MLIGFIIVVIAVIGAGYIL) threads the bilayer. The Cytoplasmic portion of the chain corresponds to 23–571 (KRKHYQRINE…ASKVSVDDIE (549 aa)). 5 coiled-coil regions span residues 102 to 147 (ATNA…TKEK), 248 to 298 (LAQM…DTLE), 326 to 374 (DALA…ASGE), 400 to 437 (KFAE…ERER), and 478 to 529 (RIAE…ENHF).

The protein belongs to the EzrA family.

It localises to the cell membrane. Functionally, negative regulator of FtsZ ring formation; modulates the frequency and position of FtsZ ring formation. Inhibits FtsZ ring formation at polar sites. Interacts either with FtsZ or with one of its binding partners to promote depolymerization. This Listeria monocytogenes serotype 4a (strain HCC23) protein is Septation ring formation regulator EzrA.